We begin with the raw amino-acid sequence, 437 residues long: Ribosomal protein uS12 methylthiotransferase RimO (437 aa).

In terms of domain architecture, MTTase N-terminal spans 3 to 118 (KKFYITTLGC…AGKILREKFP (116 aa)). Positions 12, 48, 81, 157, 161, and 164 each coordinate [4Fe-4S] cluster. In terms of domain architecture, Radical SAM core spans 143–370 (NYSKPYAYVK…RDSHLEILEE (228 aa)). The 65-residue stretch at 373–437 (ESRIGRTYDA…YEYDMNGTWV (65 aa)) folds into the TRAM domain.

The protein belongs to the methylthiotransferase family. RimO subfamily. It depends on [4Fe-4S] cluster as a cofactor.

It is found in the cytoplasm. The enzyme catalyses L-aspartate(89)-[ribosomal protein uS12]-hydrogen + (sulfur carrier)-SH + AH2 + 2 S-adenosyl-L-methionine = 3-methylsulfanyl-L-aspartate(89)-[ribosomal protein uS12]-hydrogen + (sulfur carrier)-H + 5'-deoxyadenosine + L-methionine + A + S-adenosyl-L-homocysteine + 2 H(+). Functionally, catalyzes the methylthiolation of an aspartic acid residue of ribosomal protein uS12. This Leptospira interrogans serogroup Icterohaemorrhagiae serovar copenhageni (strain Fiocruz L1-130) protein is Ribosomal protein uS12 methylthiotransferase RimO.